The following is a 121-amino-acid chain: Large ribosomal subunit protein uL14c (121 aa).

The protein belongs to the universal ribosomal protein uL14 family. Part of the 50S ribosomal subunit.

The protein resides in the plastid. Its subcellular location is the chloroplast. Its function is as follows. Binds to 23S rRNA. This Guillardia theta (Cryptophyte) protein is Large ribosomal subunit protein uL14c.